Reading from the N-terminus, the 103-residue chain is Large ribosomal subunit protein bL21 (103 aa).

It belongs to the bacterial ribosomal protein bL21 family. Part of the 50S ribosomal subunit. Contacts protein L20.

This protein binds to 23S rRNA in the presence of protein L20. The protein is Large ribosomal subunit protein bL21 of Desulforapulum autotrophicum (strain ATCC 43914 / DSM 3382 / VKM B-1955 / HRM2) (Desulfobacterium autotrophicum).